Consider the following 533-residue polypeptide: Peptide chain release factor 3 (533 aa).

Residues 11 to 284 (RRRRTFAIIS…ALVGLSPEPL (274 aa)) form the tr-type G domain. GTP contacts are provided by residues 20–27 (SHPDAGKT), 92–96 (DTPGH), and 146–149 (NKLD).

The protein belongs to the TRAFAC class translation factor GTPase superfamily. Classic translation factor GTPase family. PrfC subfamily.

The protein resides in the cytoplasm. Increases the formation of ribosomal termination complexes and stimulates activities of RF-1 and RF-2. It binds guanine nucleotides and has strong preference for UGA stop codons. It may interact directly with the ribosome. The stimulation of RF-1 and RF-2 is significantly reduced by GTP and GDP, but not by GMP. In Ralstonia nicotianae (strain ATCC BAA-1114 / GMI1000) (Ralstonia solanacearum), this protein is Peptide chain release factor 3.